Here is a 222-residue protein sequence, read N- to C-terminus: Thymidylate kinase (222 aa).

Residues 29–34 (RVGKST) and arginine 111 contribute to the ATP site. The LID stretch occupies residues 146–170 (LSMSSEDATKRGEYGGERYEKLEFQ).

It belongs to the thymidylate kinase family. Homodimer. The cofactor is Mg(2+).

It catalyses the reaction dTMP + ATP = dTDP + ADP. The protein operates within pyrimidine metabolism; dTTP biosynthesis. In terms of biological role, catalyzes the phosphorylation of thymidine monophosphate (dTMP) to thymidine diphosphate (dTDP), the immediate precursor for the DNA building block dTTP, with ATP as the preferred phosphoryl donor in the presence of Mg(2+). In Dictyostelium discoideum (Social amoeba), this protein is Thymidylate kinase (dtymk).